We begin with the raw amino-acid sequence, 729 residues long: Replication restart protein PriA (729 aa).

One can recognise a Helicase ATP-binding domain in the interval 209-376 (QTALGRFRSF…QSGAYRLLQL (168 aa)). 222–229 (GITGSGKT) serves as a coordination point for ATP. Positions 319–322 (DEEH) match the DEAH box motif. Residues cysteine 436, cysteine 439, cysteine 445, cysteine 448, cysteine 463, cysteine 466, cysteine 476, and cysteine 479 each contribute to the Zn(2+) site. In terms of domain architecture, Helicase C-terminal spans 471-623 (PIPFKCPDCG…YAVFAENELN (153 aa)).

This sequence belongs to the helicase family. PriA subfamily. As to quaternary structure, interacts with PriB with high affinity in the absence of DNA. Component of the replication restart primosome. It depends on Zn(2+) as a cofactor.

The enzyme catalyses Couples ATP hydrolysis with the unwinding of duplex DNA by translocating in the 3'-5' direction.. It catalyses the reaction ATP + H2O = ADP + phosphate + H(+). Helicase and ATPase activities on forked DNA are stimulated by PriB; E.coli PriB does not stimulate this helicase. PriA:PriB complex-catalyzed duplex DNA winding is inhibited by CGS 15943 (CHEBI:131351). CGS 15943 decreases ATP hydrolysis and decreases PriA's affinity for DNA. Initiates the restart of stalled replication forks, which reloads the replicative helicase on sites other than the origin of replication. Recognizes and binds to abandoned replication forks and remodels them to uncover a helicase loading site. Promotes assembly of the primosome at these replication forks. Functionally, DNA helicase with greatest unwinding activity on forked DNA substrates with relatively short duplex lagging strand arms. A DNA-dependent ATPase. Required for DNA transformation and DNA repair. Binds single-stranded (ss)DNA and replication fork-like DNA but not double-stranded (ds)DNA. This is Replication restart protein PriA from Neisseria gonorrhoeae (strain ATCC 700825 / FA 1090).